Consider the following 379-residue polypeptide: Arginine biosynthesis bifunctional protein ArgJ (379 aa).

Positions 141, 163, 174, 252, 374, and 379 each coordinate substrate. Threonine 174 serves as the catalytic Nucleophile.

The protein belongs to the ArgJ family. Heterotetramer of two alpha and two beta chains.

Its subcellular location is the cytoplasm. It catalyses the reaction N(2)-acetyl-L-ornithine + L-glutamate = N-acetyl-L-glutamate + L-ornithine. It carries out the reaction L-glutamate + acetyl-CoA = N-acetyl-L-glutamate + CoA + H(+). The protein operates within amino-acid biosynthesis; L-arginine biosynthesis; L-ornithine and N-acetyl-L-glutamate from L-glutamate and N(2)-acetyl-L-ornithine (cyclic): step 1/1. It functions in the pathway amino-acid biosynthesis; L-arginine biosynthesis; N(2)-acetyl-L-ornithine from L-glutamate: step 1/4. Catalyzes two activities which are involved in the cyclic version of arginine biosynthesis: the synthesis of N-acetylglutamate from glutamate and acetyl-CoA as the acetyl donor, and of ornithine by transacetylation between N(2)-acetylornithine and glutamate. The protein is Arginine biosynthesis bifunctional protein ArgJ of Aquifex aeolicus (strain VF5).